The sequence spans 213 residues: Holliday junction branch migration complex subunit RuvA (213 aa).

Residues 1–64 (MIASVTGEVA…DEAPLLFGFA (64 aa)) are domain I. Residues 65–143 (QGDEKEIFTV…LPEPPVQQAN (79 aa)) form a domain II region. The segment at 144–152 (QPQVPVWRD) is flexible linker. A domain III region spans residues 152-213 (DQVVDALTGL…GTTHAPTGRR (62 aa)).

Belongs to the RuvA family. In terms of assembly, homotetramer. Forms an RuvA(8)-RuvB(12)-Holliday junction (HJ) complex. HJ DNA is sandwiched between 2 RuvA tetramers; dsDNA enters through RuvA and exits via RuvB. An RuvB hexamer assembles on each DNA strand where it exits the tetramer. Each RuvB hexamer is contacted by two RuvA subunits (via domain III) on 2 adjacent RuvB subunits; this complex drives branch migration. In the full resolvosome a probable DNA-RuvA(4)-RuvB(12)-RuvC(2) complex forms which resolves the HJ.

Its subcellular location is the cytoplasm. Functionally, the RuvA-RuvB-RuvC complex processes Holliday junction (HJ) DNA during genetic recombination and DNA repair, while the RuvA-RuvB complex plays an important role in the rescue of blocked DNA replication forks via replication fork reversal (RFR). RuvA specifically binds to HJ cruciform DNA, conferring on it an open structure. The RuvB hexamer acts as an ATP-dependent pump, pulling dsDNA into and through the RuvAB complex. HJ branch migration allows RuvC to scan DNA until it finds its consensus sequence, where it cleaves and resolves the cruciform DNA. The chain is Holliday junction branch migration complex subunit RuvA from Kocuria rhizophila (strain ATCC 9341 / DSM 348 / NBRC 103217 / DC2201).